Reading from the N-terminus, the 160-residue chain is MAPK regulated corepressor interacting protein 2 (160 aa).

N-acetylmethionine is present on M1. The tract at residues M1–P64 is disordered. At R35 the chain carries Omega-N-methylarginine. A compositionally biased stretch (pro residues) spans P37–S61. Residue S61 is modified to Phosphoserine. R65 is modified (omega-N-methylarginine). A Phosphoserine modification is found at S82.

Belongs to the MCRIP family. Interacts with DDX6. Interacts with MCRIP1.

The protein localises to the cytoplasm. Its subcellular location is the stress granule. It is found in the nucleus. This chain is MAPK regulated corepressor interacting protein 2 (MCRIP2), found in Homo sapiens (Human).